The chain runs to 261 residues: Phosphate import ATP-binding protein PstB 1 (261 aa).

Residues 8–256 (IKVNNLSFYY…PHDSRTREYV (249 aa)) form the ABC transporter domain. 40-47 (GPSGCGKS) lines the ATP pocket.

Belongs to the ABC transporter superfamily. Phosphate importer (TC 3.A.1.7) family. The complex is composed of two ATP-binding proteins (PstB), two transmembrane proteins (PstC and PstA) and a solute-binding protein (PstS).

It localises to the cell inner membrane. It catalyses the reaction phosphate(out) + ATP + H2O = ADP + 2 phosphate(in) + H(+). Its function is as follows. Part of the ABC transporter complex PstSACB involved in phosphate import. Responsible for energy coupling to the transport system. This is Phosphate import ATP-binding protein PstB 1 from Nostoc sp. (strain PCC 7120 / SAG 25.82 / UTEX 2576).